The sequence spans 111 residues: Heat shock 70 kDa protein (111 aa).

It belongs to the heat shock protein 70 family.

The chain is Heat shock 70 kDa protein (HSP70) from Hydra oligactis (Brown hydra).